A 792-amino-acid chain; its full sequence is Protocadherin beta-18 (792 aa).

Positions 1 to 26 are cleaved as a signal peptide; it reads MAARGSCVSRQRQVLFLFLLGGLCLA. Cadherin domains are found at residues 27–133, 134–242, 243–347, 348–451, 452–561, and 568–676; these read GSEL…SPIF, QDKK…APQF, PQEL…APEL, IMSS…APAF, NQTS…APFV, and ASAP…LPEV. Asn-169 is a glycosylation site (N-linked (GlcNAc...) asparagine). N-linked (GlcNAc...) asparagine glycans are attached at residues Asn-418 and Asn-452. The helical transmembrane segment at 693–713 threads the bilayer; sequence VIALASVSSLFLLSVLLFVGV.

It localises to the cell membrane. Functionally, potential calcium-dependent cell-adhesion protein. In Mus musculus (Mouse), this protein is Protocadherin beta-18 (Pcdhb18).